Reading from the N-terminus, the 456-residue chain is Bifunctional protein GlmU (456 aa).

The segment at 1–229 (MLNSAMSVVI…LSEVEGVNNR (229 aa)) is pyrophosphorylase. UDP-N-acetyl-alpha-D-glucosamine-binding positions include 11-14 (LAAG), K25, Q76, 81-82 (GT), 103-105 (YGD), G140, E154, N169, and N227. D105 contributes to the Mg(2+) binding site. N227 provides a ligand contact to Mg(2+). Residues 230–250 (LQLSRLERVYQSEQAEKLLLA) form a linker region. The interval 251–456 (GVMLRDPARF…QGWQRPAKKK (206 aa)) is N-acetyltransferase. Residues R333 and K351 each contribute to the UDP-N-acetyl-alpha-D-glucosamine site. H363 acts as the Proton acceptor in catalysis. UDP-N-acetyl-alpha-D-glucosamine contacts are provided by Y366 and N377. Residues A380, 386–387 (NY), S405, A423, and R440 contribute to the acetyl-CoA site.

In the N-terminal section; belongs to the N-acetylglucosamine-1-phosphate uridyltransferase family. The protein in the C-terminal section; belongs to the transferase hexapeptide repeat family. As to quaternary structure, homotrimer. Requires Mg(2+) as cofactor.

It is found in the cytoplasm. It catalyses the reaction alpha-D-glucosamine 1-phosphate + acetyl-CoA = N-acetyl-alpha-D-glucosamine 1-phosphate + CoA + H(+). The enzyme catalyses N-acetyl-alpha-D-glucosamine 1-phosphate + UTP + H(+) = UDP-N-acetyl-alpha-D-glucosamine + diphosphate. It functions in the pathway nucleotide-sugar biosynthesis; UDP-N-acetyl-alpha-D-glucosamine biosynthesis; N-acetyl-alpha-D-glucosamine 1-phosphate from alpha-D-glucosamine 6-phosphate (route II): step 2/2. Its pathway is nucleotide-sugar biosynthesis; UDP-N-acetyl-alpha-D-glucosamine biosynthesis; UDP-N-acetyl-alpha-D-glucosamine from N-acetyl-alpha-D-glucosamine 1-phosphate: step 1/1. It participates in bacterial outer membrane biogenesis; LPS lipid A biosynthesis. Its function is as follows. Catalyzes the last two sequential reactions in the de novo biosynthetic pathway for UDP-N-acetylglucosamine (UDP-GlcNAc). The C-terminal domain catalyzes the transfer of acetyl group from acetyl coenzyme A to glucosamine-1-phosphate (GlcN-1-P) to produce N-acetylglucosamine-1-phosphate (GlcNAc-1-P), which is converted into UDP-GlcNAc by the transfer of uridine 5-monophosphate (from uridine 5-triphosphate), a reaction catalyzed by the N-terminal domain. In Citrobacter koseri (strain ATCC BAA-895 / CDC 4225-83 / SGSC4696), this protein is Bifunctional protein GlmU.